The following is a 251-amino-acid chain: Chlorocatechol 1,2-dioxygenase (251 aa).

The Fe cation site is built by Y130, Y164, H188, and H190.

Belongs to the intradiol ring-cleavage dioxygenase family. Fe(3+) is required as a cofactor.

It catalyses the reaction 3-chlorocatechol + O2 = (2E,4Z)-2-chloromuconate + 2 H(+). It carries out the reaction 3,4-dichlorocatechol + O2 = (2Z,4Z)-2,3-dichloromuconate + 2 H(+). The catalysed reaction is 3,5-dichlorocatechol + O2 = (2E,4E)-2,4-dichloromuconate + 2 H(+). The enzyme catalyses 3,6-dichlorocatechol + O2 = (2E,4E)-2,5-dichloromuconate + H(+). It catalyses the reaction 3,4,6-trichlorocatechol + O2 = (2Z,4E)-2,3,5-trichloromuconate + H(+). It functions in the pathway xenobiotic degradation. Chlorocatechol 1,2-dioxygenase involved in the degradation of chlorinated benzenes, that occurs via chlorocatechol intermediates. Displays broad substrate specificity. Preferentially cleaves 3-chlorocatechol and 3,4-dichlorocatechol, and shows lower activity on 3,5-dichlorocatechol, 3,6-dichlorocatechol and 3,4,6-trichlorocatechol in vitro. Is not able to convert 3,4,5-trichlorocatechol and 3,4,5,6-tetrachlorocatechol. Thus, probably functions in the degradation pathways of 1,2-dichlorobenzene, 1,4-dichlorobenzene and 1,2,4-trichlorobenzene (via 3,4-dichlorocatechol, 3,6-dichlorocatechol and 3,4,6-trichlorocatechol intermediates, respectively), which allow Pseudomonas sp. strain P51 to grow on these substrates as the sole carbon and energy source. The protein is Chlorocatechol 1,2-dioxygenase of Pseudomonas sp. (strain P51).